Here is a 617-residue protein sequence, read N- to C-terminus: Electron transfer flavoprotein-ubiquinone oxidoreductase, mitochondrial (617 aa).

A mitochondrion-targeting transit peptide spans 1–33; that stretch reads MLVPLAKLSCLAYQCFHALKIKKNYLPLCATRW. 71-85 is an FAD binding site; sequence VVIVGAGPAGLSAAV. Lysine 96 is subject to N6-acetyllysine. Residues 109–130 lie within the membrane without spanning it; sequence IGAHTLSGACLDPGAFKELFPD. An N6-acetyllysine mark is found at lysine 132 and lysine 223. 2 residues coordinate a ubiquinone: glycine 305 and glycine 306. The residue at position 357 (lysine 357) is an N6-acetyllysine. Residues 428-447 lie within the membrane without spanning it; it reads IGLHVTEYEDNLKNSWVWKE. Serine 551 is modified (phosphoserine). [4Fe-4S] cluster is bound by residues cysteine 561, cysteine 586, cysteine 589, and cysteine 592. Residues 577 to 606 enclose the 4Fe-4S ferredoxin-type domain; that stretch reads FRLQINAQNCVHCKTCDIKDPSQNINWVVP.

Belongs to the ETF-QO/FixC family. In terms of assembly, monomer. [4Fe-4S] cluster serves as cofactor. It depends on FAD as a cofactor.

Its subcellular location is the mitochondrion inner membrane. The catalysed reaction is a ubiquinone + reduced [electron-transfer flavoprotein] = a ubiquinol + oxidized [electron-transfer flavoprotein] + H(+). In terms of biological role, accepts electrons from ETF and reduces ubiquinone. This Homo sapiens (Human) protein is Electron transfer flavoprotein-ubiquinone oxidoreductase, mitochondrial.